A 496-amino-acid polypeptide reads, in one-letter code: Gamma-aminobutyric acid receptor subunit beta-like (496 aa).

A signal peptide (or 27) is located at residues 1 to 20 (MTCFTRVGVSCGLFFFLLGA). Residues 21–258 (QLQLIRCIRK…SFKLQRNIGY (238 aa)) are Extracellular-facing. 2 N-linked (GlcNAc...) asparagine glycosylation sites follow: Asn39 and Asn189. The cysteines at positions 176 and 190 are disulfide-linked. Transmembrane regions (helical) follow at residues 259–280 (FVFQ…SFWI), 285–306 (TSAR…STGV), and 318–342 (AIDI…AVNY). At 343 to 472 (TYWGKRAKKK…KIKDVNIIDK (130 aa)) the chain is on the cytoplasmic side. Residues 473-494 (YSRMIFPISFLAFNLGYWLFYI) form a helical membrane-spanning segment.

It belongs to the ligand-gated ion channel (TC 1.A.9) family. Gamma-aminobutyric acid receptor (TC 1.A.9.5) subfamily. As to quaternary structure, generally pentameric. There are five types of GABA(A) receptor chains: alpha, beta, gamma, delta, and rho. Interacts with Grd (alpha chain).

It localises to the postsynaptic cell membrane. The protein resides in the cell membrane. Functionally, GABA, an inhibitory neurotransmitter, mediates neuronal inhibition by binding to the GABA receptor and opening an integral chloride channel. Combines with the ligand-gated ion channel subunit GRD to form cation-selective GABA-gated ion channels when coexpressed in Xenopus laevis oocytes. The protein is Gamma-aminobutyric acid receptor subunit beta-like (Lcch3) of Drosophila melanogaster (Fruit fly).